A 494-amino-acid polypeptide reads, in one-letter code: UPF0371 protein SPJ_0333 (494 aa).

Belongs to the UPF0371 family.

In Streptococcus pneumoniae (strain JJA), this protein is UPF0371 protein SPJ_0333.